The chain runs to 271 residues: 2-dehydro-3-deoxyphosphooctonate aldolase (271 aa).

It belongs to the KdsA family.

It localises to the cytoplasm. It catalyses the reaction D-arabinose 5-phosphate + phosphoenolpyruvate + H2O = 3-deoxy-alpha-D-manno-2-octulosonate-8-phosphate + phosphate. It functions in the pathway carbohydrate biosynthesis; 3-deoxy-D-manno-octulosonate biosynthesis; 3-deoxy-D-manno-octulosonate from D-ribulose 5-phosphate: step 2/3. It participates in bacterial outer membrane biogenesis; lipopolysaccharide biosynthesis. The chain is 2-dehydro-3-deoxyphosphooctonate aldolase from Campylobacter jejuni subsp. jejuni serotype O:23/36 (strain 81-176).